Consider the following 304-residue polypeptide: Killer cell immunoglobulin-like receptor 2DS2 (304 aa).

The first 21 residues, 1-21 (MSLMVVSMACVGFFLLQGAWP), serve as a signal peptide directing secretion. Topologically, residues 22-245 (HEGVHRKPSL…SKTGNPRHLH (224 aa)) are extracellular. 2 consecutive Ig-like C2-type domains span residues 42–107 (EETV…VTHS) and 142–205 (GESV…FRDS). Cystine bridges form between Cys-49–Cys-100 and Cys-149–Cys-198. Residues Asn-84, Asn-178, and Asn-211 are each glycosylated (N-linked (GlcNAc...) asparagine). A disordered region spans residues 220–239 (VTGNPSNSWPSPTEPSSKTG). A helical transmembrane segment spans residues 246–265 (VLIGTSVVKIPFTILLFFLL). Topologically, residues 266–304 (HRWCSNKKNAAVMDQEPAGNRTVNSEDSDEQDHQEVSYA) are cytoplasmic. Residues 280-304 (QEPAGNRTVNSEDSDEQDHQEVSYA) are disordered.

Belongs to the immunoglobulin superfamily.

It localises to the cell membrane. Functionally, receptor on natural killer (NK) cells for HLA-C alleles. Does not inhibit the activity of NK cells. The polypeptide is Killer cell immunoglobulin-like receptor 2DS2 (Homo sapiens (Human)).